The primary structure comprises 862 residues: Protein translocase subunit SecA (862 aa).

Residues Gln-88, 106–110, and Asp-506 contribute to the ATP site; that span reads GEGKT. Residues Cys-839, Cys-841, Cys-850, and His-851 each contribute to the Zn(2+) site.

The protein belongs to the SecA family. In terms of assembly, monomer and homodimer. Part of the essential Sec protein translocation apparatus which comprises SecA, SecYEG and auxiliary proteins SecDF-YajC and YidC. It depends on Zn(2+) as a cofactor.

It is found in the cell inner membrane. Its subcellular location is the cytoplasm. It carries out the reaction ATP + H2O + cellular proteinSide 1 = ADP + phosphate + cellular proteinSide 2.. Its function is as follows. Part of the Sec protein translocase complex. Interacts with the SecYEG preprotein conducting channel. Has a central role in coupling the hydrolysis of ATP to the transfer of proteins into and across the cell membrane, serving as an ATP-driven molecular motor driving the stepwise translocation of polypeptide chains across the membrane. The chain is Protein translocase subunit SecA from Campylobacter jejuni subsp. doylei (strain ATCC BAA-1458 / RM4099 / 269.97).